We begin with the raw amino-acid sequence, 251 residues long: Uridylate kinase (251 aa).

K11–G14 is an ATP binding site. The interval G19–G24 is involved in allosteric activation by GTP. Residue G53 participates in UMP binding. Residues G54 and R58 each coordinate ATP. UMP-binding positions include D73 and T134–T141. T161, Y167, and D170 together coordinate ATP.

This sequence belongs to the UMP kinase family. Homohexamer.

The protein localises to the cytoplasm. The catalysed reaction is UMP + ATP = UDP + ADP. It participates in pyrimidine metabolism; CTP biosynthesis via de novo pathway; UDP from UMP (UMPK route): step 1/1. With respect to regulation, allosterically activated by GTP. Inhibited by UTP. Catalyzes the reversible phosphorylation of UMP to UDP. The sequence is that of Uridylate kinase from Protochlamydia amoebophila (strain UWE25).